We begin with the raw amino-acid sequence, 148 residues long: Lysozyme C (148 aa).

Residues 1 to 18 (MKALIILGLVLLSVTVQG) form the signal peptide. One can recognise a C-type lysozyme domain in the interval 19 to 148 (KIFERCELAR…VSQYVKGCGV (130 aa)). Intrachain disulfides connect Cys24–Cys146, Cys48–Cys134, Cys83–Cys99, and Cys95–Cys113. Active-site residues include Glu53 and Asp71.

Belongs to the glycosyl hydrolase 22 family. As to quaternary structure, monomer.

The protein localises to the secreted. The enzyme catalyses Hydrolysis of (1-&gt;4)-beta-linkages between N-acetylmuramic acid and N-acetyl-D-glucosamine residues in a peptidoglycan and between N-acetyl-D-glucosamine residues in chitodextrins.. In terms of biological role, lysozymes have primarily a bacteriolytic function; those in tissues and body fluids are associated with the monocyte-macrophage system and enhance the activity of immunoagents. The sequence is that of Lysozyme C (LYZ) from Nasalis larvatus (Proboscis monkey).